The primary structure comprises 165 residues: Transcription antitermination protein NusB (165 aa).

Belongs to the NusB family.

Involved in transcription antitermination. Required for transcription of ribosomal RNA (rRNA) genes. Binds specifically to the boxA antiterminator sequence of the ribosomal RNA (rrn) operons. This Chlorobium phaeobacteroides (strain DSM 266 / SMG 266 / 2430) protein is Transcription antitermination protein NusB.